A 214-amino-acid polypeptide reads, in one-letter code: Alkaline phosphatase-like protein (214 aa).

The next 3 membrane-spanning stretches (helical) occupy residues 48 to 68, 141 to 161, and 177 to 197; these read LGII…ALIL, FLIL…CLGA, and YSSV…LIFV.

It belongs to the DedA family.

Its subcellular location is the cell membrane. The polypeptide is Alkaline phosphatase-like protein (apl) (Lactococcus lactis subsp. lactis (strain IL1403) (Streptococcus lactis)).